The following is a 255-amino-acid chain: MNALVAHNSKAWDKKVETGNEWTVAVEQQVIEQAKKGNWDIRVTPMKDVPKDWFPPIKGLKVLCLASGGGQQGPVLAAAGADVTVLDNSEKQLNQDRMIAERDGLTIHTVKGSMDDLSVFNDESFDVIVHPVANVFVENVLPVWKEAYRVLKRNGILISGFVNPVVFLFDTELEQQGVLKVKHSIPYADPEDLPKHKVKKLIENNEALEFGHSLEDQIKGQIDAGFIVTGFYEDKGGFVLDQYIHTYSATRSVKV.

It belongs to the methyltransferase superfamily.

This is an uncharacterized protein from Bacillus subtilis (strain 168).